A 95-amino-acid polypeptide reads, in one-letter code: MKITKAEVEHVALLARLELTEQEAETFTGQMDAILAYVDKLNELDTDGIVPTAHAVPMENAFRADEVTPSIGIENALGNAPKRAESFFRVPKVIE.

Belongs to the GatC family. As to quaternary structure, heterotrimer of A, B and C subunits.

The catalysed reaction is L-glutamyl-tRNA(Gln) + L-glutamine + ATP + H2O = L-glutaminyl-tRNA(Gln) + L-glutamate + ADP + phosphate + H(+). The enzyme catalyses L-aspartyl-tRNA(Asn) + L-glutamine + ATP + H2O = L-asparaginyl-tRNA(Asn) + L-glutamate + ADP + phosphate + 2 H(+). In terms of biological role, allows the formation of correctly charged Asn-tRNA(Asn) or Gln-tRNA(Gln) through the transamidation of misacylated Asp-tRNA(Asn) or Glu-tRNA(Gln) in organisms which lack either or both of asparaginyl-tRNA or glutaminyl-tRNA synthetases. The reaction takes place in the presence of glutamine and ATP through an activated phospho-Asp-tRNA(Asn) or phospho-Glu-tRNA(Gln). This Geotalea uraniireducens (strain Rf4) (Geobacter uraniireducens) protein is Aspartyl/glutamyl-tRNA(Asn/Gln) amidotransferase subunit C.